The following is a 222-amino-acid chain: UPF0502 protein Lcho_2066 (222 aa).

The protein belongs to the UPF0502 family.

This chain is UPF0502 protein Lcho_2066, found in Leptothrix cholodnii (strain ATCC 51168 / LMG 8142 / SP-6) (Leptothrix discophora (strain SP-6)).